A 372-amino-acid chain; its full sequence is Alpha-parvin (372 aa).

Positions Met1 to Val11 are enriched in low complexity. A disordered region spans residues Met1–Lys44. Ala2 is modified (N-acetylalanine). Residues Ser8, Ser14, and Ser19 each carry the phosphoserine modification. The tract at residues Pro21 to Lys25 is interaction with ARHGAP31. A phosphoserine mark is found at Ser28 and Ser62. 2 Calponin-homology (CH) domains span residues Gln95–Arg202 and Asn262–Arg369. The required for interaction with TESK1 and ILK stretch occupies residues Gly223 to Glu372.

Belongs to the parvin family. Component of the heterotrimeric IPP (ILK-PINCH-PARVIN) complex composed of ILK, LIMS1/PINCH and PARVA; the complex binds to F-actin via the C-terminal tail of LIMS1 and the N-terminal region of PARVA, promoting F-actin filament bundling. Interacts with TGFB1I1. Interacts with ARHGAP31. Interacts with the actin cytoskeleton. Interacts (via C-terminus) with TESK1 (via C-terminus); the interaction inhibits TESK1 kinase activity. Interacts with PXN/PAXILLIN (via LD motif 4). Widely expressed.

It localises to the cell junction. The protein localises to the focal adhesion. Its subcellular location is the cell membrane. The protein resides in the cytoplasm. It is found in the cytoskeleton. It localises to the myofibril. The protein localises to the sarcomere. Its subcellular location is the z line. In terms of biological role, plays a role in sarcomere organization and in smooth muscle cell contraction. Required for normal development of the embryonic cardiovascular system, and for normal septation of the heart outflow tract. Plays a role in sprouting angiogenesis and is required for normal adhesion of vascular smooth muscle cells to endothelial cells during blood vessel development. Plays a role in the reorganization of the actin cytoskeleton, formation of lamellipodia and ciliogenesis. Plays a role in the establishment of cell polarity, cell adhesion, cell spreading, and directed cell migration. Within the IPP (ILK-PINCH-PARVIN) complex, binds to F-actin, promoting F-actin bundling, a process required to generate force for actin cytoskeleton reorganization and subsequent dynamic cell adhesion events such as cell spreading and migration. The chain is Alpha-parvin (Parva) from Rattus norvegicus (Rat).